Here is a 306-residue protein sequence, read N- to C-terminus: Leucine-rich repeat-containing protein 59 (306 aa).

M1 is subject to N-acetylmethionine. T2 is modified (N-acetylthreonine; in Leucine-rich repeat-containing protein 59, N-terminally processed). The Cytoplasmic portion of the chain corresponds to 2–244; sequence TKAGSKGGNL…KPPPRKHTRS (243 aa). 5 LRR repeats span residues 10-31, 40-62, 63-84, 86-107, and 109-128; these read NLRD…NEVP, KATV…CGLT, HLVK…FGRL, NLQH…FAQL, and SLKW…AKVA. A phosphoserine mark is found at S23 and S25. K73 bears the N6-succinyllysine mark. K135 is modified (N6-acetyllysine). Positions 152 to 216 form a coiled coil; the sequence is QADQERERQR…KAAKREQEKK (65 aa). Residues 175 to 221 are compositionally biased toward basic and acidic residues; the sequence is AKQRAKEAQERELRKREKAEEKERRRKEYDALKAAKREQEKKPKKET. The tract at residues 175 to 241 is disordered; that stretch reads AKQRAKEAQE…RPRKPPPRKH (67 aa). Residues 229–241 are compositionally biased toward basic residues; the sequence is SSSRPRKPPPRKH. A helical transmembrane segment spans residues 245–265; that stretch reads WAVLKLLLLLLLCVAGGLVAC. Residues 266-306 lie on the Lumenal side of the membrane; it reads RVTELQQQPLCTSVNTIYDNAVRGLRSHDILQWVLQTDSQQ.

In terms of assembly, can form homodimers. Interacts with SGO1. Interacts with FGF1.

It localises to the microsome membrane. Its subcellular location is the endoplasmic reticulum membrane. The protein localises to the nucleus envelope. In terms of biological role, required for nuclear import of FGF1, but not that of FGF2. Might regulate nuclear import of exogenous FGF1 by facilitating interaction with the nuclear import machinery and by transporting cytosolic FGF1 to, and possibly through, the nuclear pores. This Bos taurus (Bovine) protein is Leucine-rich repeat-containing protein 59 (LRRC59).